The chain runs to 243 residues: uncharacterized protein (243 aa).

It is found in the nucleus. It localises to the nucleolus. This is an uncharacterized protein from Schizosaccharomyces pombe (strain 972 / ATCC 24843) (Fission yeast).